We begin with the raw amino-acid sequence, 471 residues long: SVGFKAGVKDYKLTYYTPEYQPQDTDILAAFRVTPQPGVPSEEAGAAVAAESSTGTWTTVWTDGLTSLDRYKGRCYHIDAVPGEDNQYICYVAYPLDLFEEGSVTNMFTSIVGNVFGFKALRALRLEDLRIPVAYIKTFQGPPHGIQVERDKLNKYGRPLLGCTIKPKLGLSAKNYGRAVYECLRGGLDFTKDDENVNSQPFMRWRDRFLFCAEAIYKAQAETGEIKGHYLNATAGTCEEMIKRAVFARELGVPIVMHDYLTGGFTANTSLALYCRDNGLLLHIHRAMHAVIDRQKNHGMHFRVLAKALRLSGGDHIHAGTVVGKLEGERDITLGFVDLLRDDYTEIDANRGIYFTQSWVSTPGVLPVASGGIHVWHMPALTEIFGDDSVLQFGGGTLGHPWGNAPGAVANRVALEACVQARNEGRDLARQGATIIRNASKWSPELAAACEVWKEIKFEFPAVDTLDKKKG.

Lys-5 carries the N6,N6,N6-trimethyllysine modification. Asn-114 and Thr-164 together coordinate substrate. Lys-166 serves as the catalytic Proton acceptor. A substrate-binding site is contributed by Lys-168. 3 residues coordinate Mg(2+): Lys-192, Asp-194, and Glu-195. The residue at position 192 (Lys-192) is an N6-carboxylysine. Residue His-285 is the Proton acceptor of the active site. Substrate-binding residues include Arg-286, His-318, and Ser-370.

Belongs to the RuBisCO large chain family. Type I subfamily. In terms of assembly, heterohexadecamer of 8 large chains and 8 small chains; disulfide-linked. The disulfide link is formed within the large subunit homodimers. Mg(2+) is required as a cofactor. In terms of processing, the disulfide bond which can form in the large chain dimeric partners within the hexadecamer appears to be associated with oxidative stress and protein turnover.

The protein localises to the plastid. It localises to the chloroplast. The enzyme catalyses 2 (2R)-3-phosphoglycerate + 2 H(+) = D-ribulose 1,5-bisphosphate + CO2 + H2O. The catalysed reaction is D-ribulose 1,5-bisphosphate + O2 = 2-phosphoglycolate + (2R)-3-phosphoglycerate + 2 H(+). RuBisCO catalyzes two reactions: the carboxylation of D-ribulose 1,5-bisphosphate, the primary event in carbon dioxide fixation, as well as the oxidative fragmentation of the pentose substrate in the photorespiration process. Both reactions occur simultaneously and in competition at the same active site. This is Ribulose bisphosphate carboxylase large chain from Schlumbergera truncata (Thanksgiving cactus).